We begin with the raw amino-acid sequence, 414 residues long: Serine hydroxymethyltransferase (414 aa).

Residues Leu-116 and 120–122 each bind (6S)-5,6,7,8-tetrahydrofolate; that span reads GHL. Residue Lys-224 is modified to N6-(pyridoxal phosphate)lysine. Residues Glu-240 and 348-350 each bind (6S)-5,6,7,8-tetrahydrofolate; that span reads SPF.

It belongs to the SHMT family. In terms of assembly, homodimer. It depends on pyridoxal 5'-phosphate as a cofactor.

It localises to the cytoplasm. It catalyses the reaction (6R)-5,10-methylene-5,6,7,8-tetrahydrofolate + glycine + H2O = (6S)-5,6,7,8-tetrahydrofolate + L-serine. Its pathway is one-carbon metabolism; tetrahydrofolate interconversion. It functions in the pathway amino-acid biosynthesis; glycine biosynthesis; glycine from L-serine: step 1/1. Catalyzes the reversible interconversion of serine and glycine with tetrahydrofolate (THF) serving as the one-carbon carrier. This reaction serves as the major source of one-carbon groups required for the biosynthesis of purines, thymidylate, methionine, and other important biomolecules. Also exhibits THF-independent aldolase activity toward beta-hydroxyamino acids, producing glycine and aldehydes, via a retro-aldol mechanism. The sequence is that of Serine hydroxymethyltransferase from Campylobacter jejuni subsp. jejuni serotype O:2 (strain ATCC 700819 / NCTC 11168).